The following is a 510-amino-acid chain: ATP synthase subunit alpha 1 (510 aa).

167–174 (GDRATGKT) contacts ATP.

The protein belongs to the ATPase alpha/beta chains family. As to quaternary structure, F-type ATPases have 2 components, CF(1) - the catalytic core - and CF(0) - the membrane proton channel. CF(1) has five subunits: alpha(3), beta(3), gamma(1), delta(1), epsilon(1). CF(0) has three main subunits: a(1), b(2) and c(9-12). The alpha and beta chains form an alternating ring which encloses part of the gamma chain. CF(1) is attached to CF(0) by a central stalk formed by the gamma and epsilon chains, while a peripheral stalk is formed by the delta and b chains.

It localises to the cell inner membrane. It carries out the reaction ATP + H2O + 4 H(+)(in) = ADP + phosphate + 5 H(+)(out). Produces ATP from ADP in the presence of a proton gradient across the membrane. The alpha chain is a regulatory subunit. The sequence is that of ATP synthase subunit alpha 1 from Paraburkholderia xenovorans (strain LB400).